Reading from the N-terminus, the 257-residue chain is Tryptophan synthase alpha chain (257 aa).

Residues E44 and D55 each act as proton acceptor in the active site.

The protein belongs to the TrpA family. In terms of assembly, tetramer of two alpha and two beta chains.

The catalysed reaction is (1S,2R)-1-C-(indol-3-yl)glycerol 3-phosphate + L-serine = D-glyceraldehyde 3-phosphate + L-tryptophan + H2O. Its pathway is amino-acid biosynthesis; L-tryptophan biosynthesis; L-tryptophan from chorismate: step 5/5. In terms of biological role, the alpha subunit is responsible for the aldol cleavage of indoleglycerol phosphate to indole and glyceraldehyde 3-phosphate. This chain is Tryptophan synthase alpha chain, found in Chlamydia caviae (strain ATCC VR-813 / DSM 19441 / 03DC25 / GPIC) (Chlamydophila caviae).